The chain runs to 305 residues: Peroxisome assembly protein 26 (305 aa).

A disordered region spans residues 1-25; it reads MKSDCSTSAAPFRGLGGPLRSSEPV. Over 1 to 246 the chain is Cytoplasmic; that stretch reads MKSDCSTSAA…RQLWDSAVSH (246 aa). The helical; Signal-anchor for type II membrane protein transmembrane segment at 247-267 threads the bilayer; sequence FFSLPFKKSLLAALILCLLVV. At 268-305 the chain is on the peroxisomal matrix side; sequence RFDPASPSSLPSLYKLAQLFRWIRKAASSRLYQLRIRD.

This sequence belongs to the peroxin-26 family. As to quaternary structure, interacts (via its cytoplasmic domain) with PEX6; interaction is direct and is ATP-dependent. Interacts with PEX1; interaction is indirect and is mediated via interaction with PEX6.

The protein resides in the peroxisome membrane. Peroxisomal docking factor that anchors PEX1 and PEX6 to peroxisome membranes. PEX26 is therefore required for the formation of the PEX1-PEX6 AAA ATPase complex, a complex that mediates the extraction of the PEX5 receptor from peroxisomal membrane. The chain is Peroxisome assembly protein 26 (PEX26) from Macaca fascicularis (Crab-eating macaque).